The primary structure comprises 368 residues: (Iso)eugenol O-methyltransferase (368 aa).

Positions 1–2 (MG) are excised as a propeptide. S-adenosyl-L-methionine-binding positions include Ser-187, 211–212 (GG), Asp-234, 254–255 (DM), and Lys-268. Residue His-272 is the Proton acceptor of the active site.

This sequence belongs to the class I-like SAM-binding methyltransferase superfamily. Cation-independent O-methyltransferase family. COMT subfamily. In terms of assembly, homodimer. As to expression, expressed in petals, style and stamens, but not in stigma, sepals, leaves or stem tissues.

It catalyses the reaction (E)-isoeugenol + S-adenosyl-L-methionine = (E)-isomethyleugenol + S-adenosyl-L-homocysteine + H(+). In terms of biological role, catalyzes the methylation of the para-4-hydroxyl of both eugenol and (iso)eugenol to methyleugenol and isomethyleugenol, respectively. The resulting products are part of a complex mixture of low-molecular-weight volatile compounds emitted by the flowers to attract pollinators. In Clarkia breweri (Fairy fans), this protein is (Iso)eugenol O-methyltransferase (IEMT1).